The following is a 311-amino-acid chain: Aspartate carbamoyltransferase catalytic subunit (311 aa).

2 residues coordinate carbamoyl phosphate: arginine 55 and threonine 56. Position 85 (lysine 85) interacts with L-aspartate. Arginine 106, histidine 135, and glutamine 138 together coordinate carbamoyl phosphate. L-aspartate contacts are provided by arginine 168 and arginine 230. Residues leucine 268 and proline 269 each coordinate carbamoyl phosphate.

Belongs to the aspartate/ornithine carbamoyltransferase superfamily. ATCase family. In terms of assembly, heterododecamer (2C3:3R2) of six catalytic PyrB chains organized as two trimers (C3), and six regulatory PyrI chains organized as three dimers (R2).

The catalysed reaction is carbamoyl phosphate + L-aspartate = N-carbamoyl-L-aspartate + phosphate + H(+). Its pathway is pyrimidine metabolism; UMP biosynthesis via de novo pathway; (S)-dihydroorotate from bicarbonate: step 2/3. Functionally, catalyzes the condensation of carbamoyl phosphate and aspartate to form carbamoyl aspartate and inorganic phosphate, the committed step in the de novo pyrimidine nucleotide biosynthesis pathway. The sequence is that of Aspartate carbamoyltransferase catalytic subunit from Yersinia pestis.